We begin with the raw amino-acid sequence, 126 residues long: Small ribosomal subunit protein uS13 (126 aa).

Residues 95–126 (GLPVRGQRTQTNARTRKGKKKTVAGKKKAGRK) are disordered. The span at 108–126 (RTRKGKKKTVAGKKKAGRK) shows a compositional bias: basic residues.

The protein belongs to the universal ribosomal protein uS13 family. As to quaternary structure, part of the 30S ribosomal subunit. Forms a loose heterodimer with protein S19. Forms two bridges to the 50S subunit in the 70S ribosome.

Located at the top of the head of the 30S subunit, it contacts several helices of the 16S rRNA. In the 70S ribosome it contacts the 23S rRNA (bridge B1a) and protein L5 of the 50S subunit (bridge B1b), connecting the 2 subunits; these bridges are implicated in subunit movement. Contacts the tRNAs in the A and P-sites. This is Small ribosomal subunit protein uS13 from Thermobifida fusca (strain YX).